We begin with the raw amino-acid sequence, 567 residues long: Frizzled-7 (567 aa).

The N-terminal stretch at M1 to A31 is a signal peptide. The Extracellular segment spans residues A32–W250. Residues P42–Q161 enclose the FZ domain. 5 cysteine pairs are disulfide-bonded: C47–C108, C55–C101, C92–C129, C118–C158, and C122–C146. N61 carries an N-linked (GlcNAc...) asparagine glycan. N162 is a glycosylation site (N-linked (GlcNAc...) asparagine). A helical transmembrane segment spans residues V251–V271. The Cytoplasmic portion of the chain corresponds to D272–P282. Residues I283–L303 traverse the membrane as a helical segment. The Extracellular portion of the chain corresponds to E304–C330. A helical transmembrane segment spans residues T331–L351. The Cytoplasmic segment spans residues S352 to Q373. A helical transmembrane segment spans residues Y374 to G394. Residues Q395 to G417 are Extracellular-facing. A helical transmembrane segment spans residues F418–F438. Topologically, residues V439 to R464 are cytoplasmic. A helical transmembrane segment spans residues I465–Y485. At E486 to T521 the chain is on the extracellular side. A helical transmembrane segment spans residues V522–W542. The Cytoplasmic portion of the chain corresponds to S543–V567. Positions K545–W550 match the Lys-Thr-X-X-X-Trp motif, mediates interaction with the PDZ domain of Dvl family members motif. Residues T565–V567 carry the PDZ-binding motif.

The protein belongs to the G-protein coupled receptor Fz/Smo family. Expressed broadly in cranial ectoderm. Also expressed in the developing somites and in other cranial placodes, including the olfactory, lens, otic placodes (lateral half of the vesicle) and epibranchial placodes. Low level of expression in all the mesoderm derivatives in the limb buds.

It is found in the cell membrane. Its subcellular location is the endosome membrane. Receptor for Wnt proteins. Most of frizzled receptors are coupled to the beta-catenin canonical signaling pathway, which leads to the activation of disheveled proteins, inhibition of GSK-3 kinase, nuclear accumulation of beta-catenin and activation of Wnt target genes. A second signaling pathway involving PKC and calcium fluxes has been seen for some family members, but it is not yet clear if it represents a distinct pathway or if it can be integrated in the canonical pathway, as PKC seems to be required for Wnt-mediated inactivation of GSK-3 kinase. Both pathways seem to involve interactions with G-proteins. May be involved in transduction and intercellular transmission of polarity information during tissue morphogenesis and/or in differentiated tissues. This Gallus gallus (Chicken) protein is Frizzled-7 (FZD7).